The following is a 197-amino-acid chain: Potassium-transporting ATPase KdpC subunit (197 aa).

The chain crosses the membrane as a helical span at residues 7-27 (PALVSMGLFTVLLGLAYPLAV).

This sequence belongs to the KdpC family. The system is composed of three essential subunits: KdpA, KdpB and KdpC.

The protein localises to the cell inner membrane. Functionally, part of the high-affinity ATP-driven potassium transport (or Kdp) system, which catalyzes the hydrolysis of ATP coupled with the electrogenic transport of potassium into the cytoplasm. This subunit acts as a catalytic chaperone that increases the ATP-binding affinity of the ATP-hydrolyzing subunit KdpB by the formation of a transient KdpB/KdpC/ATP ternary complex. This chain is Potassium-transporting ATPase KdpC subunit, found in Caulobacter vibrioides (strain ATCC 19089 / CIP 103742 / CB 15) (Caulobacter crescentus).